The chain runs to 118 residues: uncharacterized protein (118 aa).

Residues 7–27 form a helical membrane-spanning segment; that stretch reads LLTGLFVGGIIGGAAVLLTAP. Residues 31 to 118 adopt a coiled-coil conformation; sequence KQLREKMKTN…IRQLEKTLQN (88 aa).

The protein localises to the cell membrane. This is an uncharacterized protein from Bacillus subtilis (strain 168).